Here is a 97-residue protein sequence, read N- to C-terminus: Co-chaperonin GroES (97 aa).

This sequence belongs to the GroES chaperonin family. Heptamer of 7 subunits arranged in a ring. Interacts with the chaperonin GroEL.

It localises to the cytoplasm. Functionally, together with the chaperonin GroEL, plays an essential role in assisting protein folding. The GroEL-GroES system forms a nano-cage that allows encapsulation of the non-native substrate proteins and provides a physical environment optimized to promote and accelerate protein folding. GroES binds to the apical surface of the GroEL ring, thereby capping the opening of the GroEL channel. The polypeptide is Co-chaperonin GroES (Pseudomonas savastanoi pv. phaseolicola (strain 1448A / Race 6) (Pseudomonas syringae pv. phaseolicola (strain 1448A / Race 6))).